A 641-amino-acid polypeptide reads, in one-letter code: MVAFRFVYIPLPFFFFFFFFFVFFSGVSQLQDQTATKKSVRILSKILIGDDGRVYACSDNDFFSFESNGSIAWSVHMNFKCNTDFAPVYSGFNQMLLLAENRILRVIFPRNGTKSEPELFFDPGETILGFAVSVSSSSVYITVKNHGLYAYNMFRQQLWIAEPKIERFGYRLGCRKDFDNCTFNSRPVIDSCEGSIYISNNEGELYSLSLRGTYYQWIQDFSLVDRFFTVTPGNNGLVYVVFPIKSLVFALDSFSGDILWQKTIGPLAETSASDPVIDSNSWASIGSLDGTLYSFSRTGDLYKIPKNAETDSVIQIEPLLDCSGYAVYVSQTKFEGMIDRVIEDYTYVSAKKPETAVFSLVVPETRSIYWSQSYSDQIPGLLLDEDLQHFVLDERIALAFVAASSSGNPFRCRSKHEKLSSSCSFAEPEHLDIYIGNERAIIWFLLFEFVIMVLFAALVRFCFIFWKKKKLQDRPFSTFLDKRRLLHRKSREIDKTITRLQNESTANESAVDKIGDLIQKRENVKRKLSSTYSLGRDIDESKSKLKDYVLPLYGGSSRSFSYRNRENESITIFQTPSDESSSEESYRDEHYDDVADDEHDEDDLDRKQKGKLLAHSEGSSNDGDGIASSRRSIYLKHIFDD.

The N-terminal stretch at 1–29 (MVAFRFVYIPLPFFFFFFFFFVFFSGVSQ) is a signal peptide. The helical transmembrane segment at 441 to 461 (IIWFLLFEFVIMVLFAALVRF) threads the bilayer. Positions 570–627 (ITIFQTPSDESSSEESYRDEHYDDVADDEHDEDDLDRKQKGKLLAHSEGSSNDGDGIA) are disordered. Residues 584-593 (ESYRDEHYDD) show a composition bias toward basic and acidic residues. A compositionally biased stretch (acidic residues) spans 594-603 (VADDEHDEDD).

As to expression, expressed in mature siliques and in pollen, mainly in the sperm cells. Detected in the egg cell within the female gametophyte.

It is found in the cell membrane. Functionally, required for micropylar pollen tube guidance. Plays a role during early embryo patterning. The polypeptide is Protein GAMETE EXPRESSED 3 (GEX3) (Arabidopsis thaliana (Mouse-ear cress)).